The following is an 862-amino-acid chain: MASEVPYASGMPIKKIGHRSVDSSGGTTSSALKGAIQLGITHTVGSLSTKPESDVLMQDFHMVESIFFPSEGSNLTPAHHYNAFRFKTYAPVAFRYFWELFGIRPDDYLYSLCSEPLIELCSSGASGSLFYVSSDDEFIVKTVRHKEAEFLQKLLPGYYINLNQNPRTLLPKFYGLYCVQTGGKNIRIVVMNNLLPRSVKMHIKYDLKGSTYRRRASQKEREKPLPTFKDLDFLQDIPDGLFLDADVHNALCKTLQRDCLVLQSFKIMDYSLLMSIHNIDHAQREPLSSETQYSVDTRRPAPQKALYSTAMESIQGEARRGGTMETDDHMGGIPARNSKGERLLLYIGIIDILQSYRFVKKLEHSWKALIHDGDTVSVHRPGFYAEWFQRFMCNTVFKKIPLKPSPSKKLRSGSSFSQRAGSSGNSCITYQPLVSGEHKAQVTTKAEVEPGVHLGCPDVLPQTPPLEEISEGSPTPDPSFSPLVEETLQMLTTSVDNSEYMGNGDFLPTRLQAQQDAVNTVCHSKTRSNPENNVGLITLDNDCEVLTTLTPDTGRILSKLHTVQPKGKITFCMGIHVAHLALKHRQGNNHKIRIIAFVGNPVEDNEKNLVKLAKCLKKEKVNVDIINFGEEEVNTEKLTAFVNTLNGKDGTGSHLVTVPPGPSLADALISFPILAGEGGAMMGLGASDFEFGVDPSADPELALVLRVFMEEQRQRQEEEARQAAAASAAEAGIATTGTEDSDDALLKMTISQQEFGHTGLPDLSSMTEEEKIVCAMQMSLQGAEFGLAESADIDASSAMDTSEPAKEEDDYDVMQDPEFLQSVLENLPGVDPNNEAIRNAVGSLASQATKDSKKDKKEEDKK.

Positions 28–396 (TSSALKGAIQ…WFQRFMCNTV (369 aa)) constitute a PIPK domain. 2 disordered regions span residues 404–424 (PSPS…GSSG) and 453–481 (HLGC…PSFS). The span at 412-424 (SGSSFSQRAGSSG) shows a compositional bias: low complexity. The 184-residue stretch at 490-673 (MLTTSVDNSE…LADALISFPI (184 aa)) folds into the VWFA domain. In terms of domain architecture, UIM 1 spans 696–715 (SADPELALVLRVFMEEQRQR). The interval 716 to 740 (QEEEARQAAAASAAEAGIATTGTED) is disordered. The segment covering 722–731 (QAAAASAAEA) has biased composition (low complexity). One can recognise a UIM 2 domain in the interval 766-783 (MTEEEKIVCAMQMSLQGA). The disordered stretch occupies residues 826-862 (NLPGVDPNNEAIRNAVGSLASQATKDSKKDKKEEDKK). Over residues 850-862 (KDSKKDKKEEDKK) the composition is skewed to basic and acidic residues.

As to expression, testis-specific.

It is found in the cytoplasm. Its function is as follows. Has negligible PIP5 kinase activity. Binds to ubiquitinated proteins. The chain is Putative PIP5K1A and PSMD4-like protein (PIPSL) from Homo sapiens (Human).